The sequence spans 191 residues: Transposon Tn1546 resolvase (191 aa).

The region spanning 2 to 138 is the Resolvase/invertase-type recombinase catalytic domain; it reads RKIGYIRVSS…EGIELAKKEG (137 aa). S10 serves as the catalytic O-(5'-phospho-DNA)-serine intermediate. Residues 168–187 constitute a DNA-binding region (H-T-H motif); the sequence is VNQICEITNVSRASLYRKLS.

Belongs to the site-specific recombinase resolvase family.

In terms of biological role, resolvase catalyzes the resolution (a site-specific recombination) of the cointegrated replicon to yield the final transposition products. This Enterococcus faecium (Streptococcus faecium) protein is Transposon Tn1546 resolvase.